Reading from the N-terminus, the 669-residue chain is DNA ligase (669 aa).

NAD(+)-binding positions include 34–38, 83–84, and Glu114; these read DAEYD and SL. Lys116 serves as the catalytic N6-AMP-lysine intermediate. Arg137, Glu171, Lys287, and Lys311 together coordinate NAD(+). Cys405, Cys408, Cys423, and Cys428 together coordinate Zn(2+). In terms of domain architecture, BRCT spans 591–669; sequence NVESYFAGKT…EERFLQELNK (79 aa).

This sequence belongs to the NAD-dependent DNA ligase family. LigA subfamily. Mg(2+) serves as cofactor. Mn(2+) is required as a cofactor.

The catalysed reaction is NAD(+) + (deoxyribonucleotide)n-3'-hydroxyl + 5'-phospho-(deoxyribonucleotide)m = (deoxyribonucleotide)n+m + AMP + beta-nicotinamide D-nucleotide.. In terms of biological role, DNA ligase that catalyzes the formation of phosphodiester linkages between 5'-phosphoryl and 3'-hydroxyl groups in double-stranded DNA using NAD as a coenzyme and as the energy source for the reaction. It is essential for DNA replication and repair of damaged DNA. This Bacillus cereus (strain AH187) protein is DNA ligase.